The following is a 919-amino-acid chain: Periodic tryptophan protein 2 homolog (919 aa).

WD repeat units lie at residues 12–50 (GTVYRRGNLNFTCDGNSVISPVGNRVTVFDLKNNKSDTL), 53–93 (ATRY…LHHF), 94–132 (HFKGSVHSVSFSPDGRKFVVTKGNIAQMYHAPGKKREFN), 142–181 (GPYDETTCIDWTDDSRCFVVGSKDMSTWVFGAERWDNLIY), and 186–225 (GHKDAIVACFFESNSLDLYSLSQDGVLCMWQCDTPPEGLR). The tract at residues 238–267 (QREEEEEEEEDQEGDRETTIRGKATPAEEE) is disordered. Residues 240 to 251 (EEEEEEEEDQEG) are compositionally biased toward acidic residues. The segment covering 252–267 (DRETTIRGKATPAEEE) has biased composition (basic and acidic residues). 9 WD repeats span residues 286–325 (GDFNNLTAAAFHKKSHLLVTGFASGIFHLHELPEFNLIHS), 328–368 (ISDQ…YVLK), 371–410 (GHFNSMVALAYSPDGQYIVTGGDDGKVKVWNTLSGFCFVT), 413–452 (EHSSGVTGVTFTATGYVVVTSSMDGTVRAFDLHRYRNFRT), 456–498 (PRPT…DVLS), 499–538 (GHEGPISGLCFNPMKSVLASASWDKTVRLWDMFDSWRTKE), 541–580 (ALTSDALAVTFRPDGAELAVATLNSQITFWDPENAVQTGS), 603–642 (AKGKAFTALCYSADGHSILAGGMSKFVCIYHVREQILMKR), and 700–740 (KPEI…DPFE). The disordered stretch occupies residues 882-919 (TKRSLDPLGSEEEAEASEDDSLHLLGGGGRDSEEEMLA). Residues 890–900 (GSEEEAEASED) show a composition bias toward acidic residues. Phosphoserine is present on residues Ser898 and Ser902.

It belongs to the WD repeat PWP2 family. Part of the small subunit (SSU) processome, composed of more than 70 proteins and the RNA chaperone small nucleolar RNA (snoRNA) U3.

It localises to the nucleus. It is found in the nucleolus. Its function is as follows. Part of the small subunit (SSU) processome, first precursor of the small eukaryotic ribosomal subunit. During the assembly of the SSU processome in the nucleolus, many ribosome biogenesis factors, an RNA chaperone and ribosomal proteins associate with the nascent pre-rRNA and work in concert to generate RNA folding, modifications, rearrangements and cleavage as well as targeted degradation of pre-ribosomal RNA by the RNA exosome. In Homo sapiens (Human), this protein is Periodic tryptophan protein 2 homolog.